Here is a 110-residue protein sequence, read N- to C-terminus: Nucleoid-associated protein YE3092 (110 aa).

The protein belongs to the YbaB/EbfC family. Homodimer.

It is found in the cytoplasm. Its subcellular location is the nucleoid. In terms of biological role, binds to DNA and alters its conformation. May be involved in regulation of gene expression, nucleoid organization and DNA protection. This Yersinia enterocolitica serotype O:8 / biotype 1B (strain NCTC 13174 / 8081) protein is Nucleoid-associated protein YE3092.